We begin with the raw amino-acid sequence, 120 residues long: Ribosome-binding factor A (120 aa).

It belongs to the RbfA family. Monomer. Binds 30S ribosomal subunits, but not 50S ribosomal subunits or 70S ribosomes.

Its subcellular location is the cytoplasm. In terms of biological role, one of several proteins that assist in the late maturation steps of the functional core of the 30S ribosomal subunit. Associates with free 30S ribosomal subunits (but not with 30S subunits that are part of 70S ribosomes or polysomes). Required for efficient processing of 16S rRNA. May interact with the 5'-terminal helix region of 16S rRNA. This chain is Ribosome-binding factor A, found in Chlorobaculum tepidum (strain ATCC 49652 / DSM 12025 / NBRC 103806 / TLS) (Chlorobium tepidum).